Here is a 698-residue protein sequence, read N- to C-terminus: Serotransferrin (698 aa).

The first 19 residues, 1-19, serve as a signal peptide directing secretion; it reads MRLAVGALLVCAVLGLCLA. Transferrin-like domains follow at residues 25-347 and 361-683; these read VRWC…NLRE and VKWC…NLRK. 2 disulfides stabilise this stretch: Cys28-Cys67 and Cys38-Cys58. Arg42 carries the dimethylated arginine modification. Ser51 carries O-linked (GalNAc...) serine glycosylation. 2 residues coordinate Fe(3+): Asp82 and Tyr114. Disulfide bonds link Cys137-Cys213, Cys156-Cys350, Cys177-Cys193, Cys180-Cys196, Cys190-Cys198, Cys246-Cys260, Cys358-Cys615, Cys364-Cys396, Cys374-Cys387, Cys421-Cys693, Cys437-Cys656, Cys469-Cys542, Cys493-Cys684, Cys503-Cys517, Cys514-Cys525, Cys582-Cys596, and Cys634-Cys639. Positions 139, 143, 145, and 146 each coordinate hydrogencarbonate. Residue Tyr207 participates in Fe(3+) binding. His268 is a binding site for Fe(3+). Residue Ser389 is modified to Phosphoserine. Positions 411 and 445 each coordinate Fe(3+). Residues Thr471, Arg475, Ala477, and Gly478 each coordinate hydrogencarbonate. Fe(3+) is bound at residue Tyr536. His604 contacts Fe(3+). The N-linked (GlcNAc...) asparagine glycan is linked to Asn630. Ser685 is subject to Phosphoserine.

The protein belongs to the transferrin family. Monomer. Part of a complex composed of SLC40A1/ferroportin, TF/transferrin and HEPH/hephaestin that transfers iron from cells to transferrin. In terms of tissue distribution, expressed by the liver and secreted in plasma.

Its subcellular location is the secreted. Transferrins are iron binding transport proteins which can bind two Fe(3+) ions in association with the binding of an anion, usually bicarbonate. It is responsible for the transport of iron from sites of absorption and heme degradation to those of storage and utilization. Serum transferrin may also have a further role in stimulating cell proliferation. The protein is Serotransferrin (TF) of Pan troglodytes (Chimpanzee).